The chain runs to 296 residues: tRNA pseudouridine synthase B (296 aa).

Aspartate 38 (nucleophile) is an active-site residue.

Belongs to the pseudouridine synthase TruB family. Type 1 subfamily.

The catalysed reaction is uridine(55) in tRNA = pseudouridine(55) in tRNA. Responsible for synthesis of pseudouridine from uracil-55 in the psi GC loop of transfer RNAs. The polypeptide is tRNA pseudouridine synthase B (Synechocystis sp. (strain ATCC 27184 / PCC 6803 / Kazusa)).